Here is a 231-residue protein sequence, read N- to C-terminus: Insertion sequence IS1162 putative ATP-binding protein (231 aa).

An ATP-binding site is contributed by 107-114 (GPTGVGKT).

The protein belongs to the IS21/IS1162 putative ATP-binding protein family.

The chain is Insertion sequence IS1162 putative ATP-binding protein from Pseudomonas fluorescens.